A 195-amino-acid chain; its full sequence is Adenylate kinase (195 aa).

Residue Gly-8–Thr-16 coordinates ATP.

The protein belongs to the archaeal adenylate kinase family. In terms of assembly, homotrimer.

The protein resides in the cytoplasm. It catalyses the reaction AMP + ATP = 2 ADP. This Saccharolobus solfataricus (strain ATCC 35092 / DSM 1617 / JCM 11322 / P2) (Sulfolobus solfataricus) protein is Adenylate kinase (adkA).